The sequence spans 339 residues: Type IV secretion system protein PtlH homolog (339 aa).

Belongs to the GSP E family.

This Bordetella bronchiseptica (strain ATCC BAA-588 / NCTC 13252 / RB50) (Alcaligenes bronchisepticus) protein is Type IV secretion system protein PtlH homolog (ptlH).